Reading from the N-terminus, the 512-residue chain is Serine--tRNA ligase, cytoplasmic (512 aa).

N-acetylmethionine is present on M1. The segment at 9–61 (RVDKGGDPALIRETQEKRFKDPGLVDQLVKADSEWRRCRFRADNLNKLKNLCS) is interaction with tRNA. A Phosphoserine modification is found at S241. 2 residues coordinate L-serine: T271 and R302. ATP is bound by residues 302 to 304 (RQE) and 318 to 321 (VHQF). Position 323 is an N6-acetyllysine (K323). Residue E325 participates in L-serine binding. ATP is bound at residue 391 to 394 (ELVS). N427 serves as a coordination point for L-serine. The segment at 472 to 512 (KPAPIDQEPSKKQKKQHEGSKKKAKEVTLENQLQNMEVTEA) is disordered. Positions 479–499 (EPSKKQKKQHEGSKKKAKEVT) are enriched in basic and acidic residues. The Nuclear localization signal signature appears at 482 to 494 (KKQKKQHEGSKKK). Positions 500 to 512 (LENQLQNMEVTEA) are enriched in polar residues.

It belongs to the class-II aminoacyl-tRNA synthetase family. Type-1 seryl-tRNA synthetase subfamily. Homodimer. The tRNA molecule may bind across the dimer. Interacts with SIRT2. Interacts with METTL6; interaction is required for the tRNA N(3)-methylcytidine methyltransferase activity of METTL6.

The protein localises to the cytoplasm. Its subcellular location is the nucleus. It catalyses the reaction tRNA(Ser) + L-serine + ATP = L-seryl-tRNA(Ser) + AMP + diphosphate + H(+). The catalysed reaction is tRNA(Sec) + L-serine + ATP = L-seryl-tRNA(Sec) + AMP + diphosphate + H(+). It participates in aminoacyl-tRNA biosynthesis; selenocysteinyl-tRNA(Sec) biosynthesis; L-seryl-tRNA(Sec) from L-serine and tRNA(Sec): step 1/1. Functionally, catalyzes the attachment of serine to tRNA(Ser) in a two-step reaction: serine is first activated by ATP to form Ser-AMP and then transferred to the acceptor end of tRNA(Ser). Is probably also able to aminoacylate tRNA(Sec) with serine, to form the misacylated tRNA L-seryl-tRNA(Sec), which will be further converted into selenocysteinyl-tRNA(Sec). In the nucleus, binds to the VEGFA core promoter and prevents MYC binding and transcriptional activation by MYC. Recruits SIRT2 to the VEGFA promoter, promoting deacetylation of histone H4 at 'Lys-16' (H4K16). Thereby, inhibits the production of VEGFA and sprouting angiogenesis mediated by VEGFA. The chain is Serine--tRNA ligase, cytoplasmic (Sars1) from Rattus norvegicus (Rat).